Reading from the N-terminus, the 596-residue chain is Chitooligosaccharidolytic beta-N-acetylglucosaminidase (596 aa).

Residues M1–A23 form the signal peptide. N166, N264, and N377 each carry an N-linked (GlcNAc...) asparagine glycan.

This sequence belongs to the glycosyl hydrolase 20 family.

The enzyme catalyses Hydrolysis of terminal non-reducing N-acetyl-D-hexosamine residues in N-acetyl-beta-D-hexosaminides.. Functionally, active during metamorphosis to degrade chitin. The protein is Chitooligosaccharidolytic beta-N-acetylglucosaminidase of Bombyx mori (Silk moth).